Consider the following 495-residue polypeptide: Ribose import ATP-binding protein RbsA (495 aa).

2 consecutive ABC transporter domains span residues 7–242 and 250–491; these read LEMR…VGRP and ERDI…TGVN. 39-46 is an ATP binding site; the sequence is GENGAGKS.

This sequence belongs to the ABC transporter superfamily. Ribose importer (TC 3.A.1.2.1) family. As to quaternary structure, the complex is composed of an ATP-binding protein (RbsA), two transmembrane proteins (RbsC) and a solute-binding protein (RbsB).

It localises to the cell inner membrane. The enzyme catalyses D-ribose(out) + ATP + H2O = D-ribose(in) + ADP + phosphate + H(+). Functionally, part of the ABC transporter complex RbsABC involved in ribose import. Responsible for energy coupling to the transport system. The chain is Ribose import ATP-binding protein RbsA from Shigella dysenteriae serotype 1 (strain Sd197).